The primary structure comprises 393 residues: Ethanol acetyltransferase 1 (393 aa).

The N-terminal 25 residues, 1–25, are a transit peptide targeting the mitochondrion; it reads MHFTRTLFNQVASKASRQLPVQKRV. An AB hydrolase-1 domain is found at 49–151; sequence PIVFVHGIFG…GVIIDNSPIE (103 aa). Residues S122, D146, and H296 each act as charge relay system in the active site. Residues 343–354 are compositionally biased toward basic and acidic residues; that stretch reads AKHAQQIEELRK. A disordered region spans residues 343-393; sequence AKHAQQIEELRKVTSTSESSIPHSTQSSEQAFTENIDLARQEREHQKSVSA. Positions 355–375 are enriched in polar residues; that stretch reads VTSTSESSIPHSTQSSEQAFT. The segment covering 379–393 has biased composition (basic and acidic residues); the sequence is DLARQEREHQKSVSA.

It belongs to the AB hydrolase superfamily.

The protein resides in the mitochondrion. The catalysed reaction is ethanol + acetyl-CoA = ethyl acetate + CoA. It catalyses the reaction acetyl-CoA + H2O = acetate + CoA + H(+). It carries out the reaction ethyl acetate + H2O = ethanol + acetate + H(+). In terms of biological role, alcohol acetyltransferase that catalyzes the synthesis of ethyl acetate from ethanol and acetyl-CoA. Can also function as a thioesterase by hydrolyzing acetyl-CoA in the absence of ethanol, as well as esterase hydrolyzing ethyl acetate. This is Ethanol acetyltransferase 1 (EAT1) from Wickerhamomyces ciferrii (strain ATCC 14091 / BCRC 22168 / CBS 111 / JCM 3599 / NBRC 0793 / NRRL Y-1031 F-60-10) (Yeast).